Consider the following 122-residue polypeptide: MIQMQTILDVADNSGAKKLFCIKVLGGSKRKYAGVGDIIVASVREALPNSKVKKGDVVKAVIVRTAKELGRPDGSYIRFDDNSGVVINNQKEPVGTRIFGPVARELRAKKFMKIISLAPEVL.

This sequence belongs to the universal ribosomal protein uL14 family. As to quaternary structure, part of the 50S ribosomal subunit. Forms a cluster with proteins L3 and L19. In the 70S ribosome, L14 and L19 interact and together make contacts with the 16S rRNA in bridges B5 and B8.

Its function is as follows. Binds to 23S rRNA. Forms part of two intersubunit bridges in the 70S ribosome. The sequence is that of Large ribosomal subunit protein uL14 from Pelobacter propionicus (strain DSM 2379 / NBRC 103807 / OttBd1).